The sequence spans 521 residues: Probable protein phosphatase 2C 16 (521 aa).

The region spanning 21 to 327 (KYVVSSMQGW…ENTTVILVQF (307 aa)) is the PPM-type phosphatase domain. 4 residues coordinate Mn(2+): aspartate 57, glycine 58, glutamine 276, and glutamate 318. The disordered stretch occupies residues 354 to 431 (AAPAGASDTS…ADADDGAPKP (78 aa)).

It belongs to the PP2C family. Requires Mg(2+) as cofactor. Mn(2+) serves as cofactor.

The enzyme catalyses O-phospho-L-seryl-[protein] + H2O = L-seryl-[protein] + phosphate. It carries out the reaction O-phospho-L-threonyl-[protein] + H2O = L-threonyl-[protein] + phosphate. This chain is Probable protein phosphatase 2C 16, found in Oryza sativa subsp. japonica (Rice).